Here is a 339-residue protein sequence, read N- to C-terminus: Anthranilate phosphoribosyltransferase (339 aa).

5-phospho-alpha-D-ribose 1-diphosphate contacts are provided by residues glycine 80, 83 to 84, threonine 88, 90 to 93, 108 to 116, and serine 120; these read GD, NIST, and KHGNRSVSS. Glycine 80 contributes to the anthranilate binding site. Position 92 (serine 92) interacts with Mg(2+). Asparagine 111 provides a ligand contact to anthranilate. Anthranilate is bound at residue arginine 166. 2 residues coordinate Mg(2+): aspartate 225 and glutamate 226.

Belongs to the anthranilate phosphoribosyltransferase family. As to quaternary structure, homodimer. Mg(2+) is required as a cofactor.

The catalysed reaction is N-(5-phospho-beta-D-ribosyl)anthranilate + diphosphate = 5-phospho-alpha-D-ribose 1-diphosphate + anthranilate. Its pathway is amino-acid biosynthesis; L-tryptophan biosynthesis; L-tryptophan from chorismate: step 2/5. Functionally, catalyzes the transfer of the phosphoribosyl group of 5-phosphorylribose-1-pyrophosphate (PRPP) to anthranilate to yield N-(5'-phosphoribosyl)-anthranilate (PRA). The polypeptide is Anthranilate phosphoribosyltransferase (Desulfosudis oleivorans (strain DSM 6200 / JCM 39069 / Hxd3) (Desulfococcus oleovorans)).